A 510-amino-acid polypeptide reads, in one-letter code: Proline--tRNA ligase (510 aa).

The protein belongs to the class-II aminoacyl-tRNA synthetase family. ProS type 3 subfamily. Homodimer.

Its subcellular location is the cytoplasm. The catalysed reaction is tRNA(Pro) + L-proline + ATP = L-prolyl-tRNA(Pro) + AMP + diphosphate. Its function is as follows. Catalyzes the attachment of proline to tRNA(Pro) in a two-step reaction: proline is first activated by ATP to form Pro-AMP and then transferred to the acceptor end of tRNA(Pro). This is Proline--tRNA ligase from Sphingomonas elodea.